We begin with the raw amino-acid sequence, 365 residues long: Elongation factor Tu (365 aa).

Residues 1 to 7, 62 to 66, and 117 to 120 each bind GTP; these read HVDHGKT, DCPGH, and NKCD. Residues 1-185 form the tr-type G domain; the sequence is HVDHGKTTLT…TLDSYIPTPE (185 aa). Position 7 (threonine 7) interacts with Mg(2+).

The protein belongs to the TRAFAC class translation factor GTPase superfamily. Classic translation factor GTPase family. EF-Tu/EF-1A subfamily. In terms of assembly, monomer.

The protein localises to the cytoplasm. It catalyses the reaction GTP + H2O = GDP + phosphate + H(+). Its function is as follows. GTP hydrolase that promotes the GTP-dependent binding of aminoacyl-tRNA to the A-site of ribosomes during protein biosynthesis. This is Elongation factor Tu from Buchnera aphidicola subsp. Schlechtendalia chinensis.